The primary structure comprises 224 residues: Abasic site processing protein YoqW (224 aa).

Catalysis depends on cysteine 2, which acts as the Nucleophile. Position 2 is a thiazolidine linkage to a ring-opened DNA abasic site (cysteine 2). The active site involves glutamate 106.

It belongs to the SOS response-associated peptidase family.

Its activity is regulated as follows. Formation and reversal of DNA-protein cross-link depends on DNA context. Catalyzes formation of the thiazolidine linkage in presence of abasic sites in single-stranded DNA. Mediates the reversal of the thiazolidine cross-link in presence of double stranded DNA. Its function is as follows. Sensor of abasic sites in single-stranded DNA (ssDNA) required to preserve genome integrity by promoting error-free repair of abasic sites. Recognizes and binds abasic sites in ssDNA at replication forks and chemically modifies the lesion by forming a covalent cross-link with DNA: forms a stable thiazolidine linkage between a ring-opened abasic site and the alpha-amino and sulfhydryl substituents of its N-terminal catalytic cysteine residue. The DNA-protein cross-link is then reversed: able to catalyze the reversal of the thiazolidine cross-link and cycle between a cross-link and a non-cross-linked state depending on DNA context: mediates self-reversal of the thiazolidine cross-link in double stranded DNA. May act as a protease: mediates autocatalytic processing of its N-terminal methionine in order to expose the catalytic cysteine. This chain is Abasic site processing protein YoqW (yoqW), found in Bacillus subtilis (strain 168).